A 465-amino-acid polypeptide reads, in one-letter code: Cysteine--tRNA ligase (465 aa).

C27 is a Zn(2+) binding site. The 'HIGH' region signature appears at 29 to 39 (PTVYDFIHIGN). Zn(2+)-binding residues include C207, H232, and E236. The 'KMSKS' region signature appears at 264–268 (KMSKS). K267 is an ATP binding site.

This sequence belongs to the class-I aminoacyl-tRNA synthetase family. Monomer. Requires Zn(2+) as cofactor.

The protein resides in the cytoplasm. It catalyses the reaction tRNA(Cys) + L-cysteine + ATP = L-cysteinyl-tRNA(Cys) + AMP + diphosphate. The sequence is that of Cysteine--tRNA ligase from Caldicellulosiruptor saccharolyticus (strain ATCC 43494 / DSM 8903 / Tp8T 6331).